The following is a 109-amino-acid chain: Large ribosomal subunit protein uL23 (109 aa).

Belongs to the universal ribosomal protein uL23 family. Part of the 50S ribosomal subunit. Contacts protein L29, and trigger factor when it is bound to the ribosome.

One of the early assembly proteins it binds 23S rRNA. One of the proteins that surrounds the polypeptide exit tunnel on the outside of the ribosome. Forms the main docking site for trigger factor binding to the ribosome. This is Large ribosomal subunit protein uL23 from Aquifex pyrophilus.